The chain runs to 290 residues: Shikimate dehydrogenase (NADP(+)) (290 aa).

Shikimate contacts are provided by residues 24 to 26 (SKS) and Thr-71. The active-site Proton acceptor is Lys-75. Shikimate is bound by residues Asn-96 and Asp-111. Residues 135-139 (GAGGA), 159-164 (NRTKQR), and Ile-228 contribute to the NADP(+) site. Tyr-230 contacts shikimate. Gly-251 lines the NADP(+) pocket.

It belongs to the shikimate dehydrogenase family. As to quaternary structure, homodimer.

The enzyme catalyses shikimate + NADP(+) = 3-dehydroshikimate + NADPH + H(+). It functions in the pathway metabolic intermediate biosynthesis; chorismate biosynthesis; chorismate from D-erythrose 4-phosphate and phosphoenolpyruvate: step 4/7. Involved in the biosynthesis of the chorismate, which leads to the biosynthesis of aromatic amino acids. Catalyzes the reversible NADPH linked reduction of 3-dehydroshikimate (DHSA) to yield shikimate (SA). This chain is Shikimate dehydrogenase (NADP(+)), found in Bartonella tribocorum (strain CIP 105476 / IBS 506).